We begin with the raw amino-acid sequence, 247 residues long: Peroxisomal membrane protein 11A (247 aa).

Topologically, residues 1–83 (MDAFIRFTNQ…SVRATDLVPR (83 aa)) are cytoplasmic. The chain crosses the membrane as a helical span at residues 84 to 105 (ICLTLASLNRVIYFICDTVLFV). The Lumenal portion of the chain corresponds to 106 to 219 (RSTGLASGVN…DQLGIYKSNP (114 aa)). The helical transmembrane segment at 220-239 (GIIGLGGLVSSVAGIITVAY) threads the bilayer. The interval 220–239 (GIIGLGGLVSSVAGIITVAY) is required for homodimerization, interaction with PEX11G, and peroxisomal localization. Residues 240–247 (PQMKLKTQ) lie on the Cytoplasmic side of the membrane.

This sequence belongs to the peroxin-11 family. In terms of assembly, homodimer. Heterodimer with PEX11G. Probably interacts with COPB2 and COPA. Interacts with PEX19. Interacts with FIS1.

The protein resides in the peroxisome membrane. May be involved in peroxisomal proliferation and may regulate peroxisomes division. May mediate binding of coatomer proteins to the peroxisomal membrane. Promotes membrane protrusion and elongation on the peroxisomal surface. The protein is Peroxisomal membrane protein 11A (PEX11A) of Bos taurus (Bovine).